Here is a 465-residue protein sequence, read N- to C-terminus: Glutamate--tRNA ligase 1 (465 aa).

Residues 8–18 (PSPTGLMHLGN) carry the 'HIGH' region motif. The short motif at 249-253 (PLSKR) is the 'KMSKS' region element. Residue lysine 252 coordinates ATP.

The protein belongs to the class-I aminoacyl-tRNA synthetase family. Glutamate--tRNA ligase type 1 subfamily. Monomer.

The protein resides in the cytoplasm. The enzyme catalyses tRNA(Glu) + L-glutamate + ATP = L-glutamyl-tRNA(Glu) + AMP + diphosphate. Catalyzes the attachment of glutamate to tRNA(Glu) in a two-step reaction: glutamate is first activated by ATP to form Glu-AMP and then transferred to the acceptor end of tRNA(Glu). This is Glutamate--tRNA ligase 1 from Coxiella burnetii (strain CbuG_Q212) (Coxiella burnetii (strain Q212)).